The following is a 102-amino-acid chain: A-type ATP synthase subunit F (102 aa).

It belongs to the V-ATPase F subunit family. Has multiple subunits with at least A(3), B(3), C, D, E, F, H, I and proteolipid K(x).

Its subcellular location is the cell membrane. Its function is as follows. Component of the A-type ATP synthase that produces ATP from ADP in the presence of a proton gradient across the membrane. This chain is A-type ATP synthase subunit F, found in Thermococcus sibiricus (strain DSM 12597 / MM 739).